A 383-amino-acid chain; its full sequence is Xylose/arabinose import ATP-binding protein XacK (383 aa).

One can recognise an ABC transporter domain in the interval 4 to 240; it reads LTLDDVTKVY…PNNLFVAGFI (237 aa). 41–48 contacts ATP; it reads GPSGCGKS.

Belongs to the ABC transporter superfamily. Carbohydrate uptake transporter-1 (CUT1) (TC 3.A.1.1) family. The complex is composed of two ATP-binding proteins (XacJ and XacK), two transmembrane proteins (XacH and XacI) and a solute-binding protein (XacG).

Its subcellular location is the cell membrane. It catalyses the reaction D-xylose(out) + ATP + H2O = D-xylose(in) + ADP + phosphate + H(+). The enzyme catalyses L-arabinose(out) + ATP + H2O = L-arabinose(in) + ADP + phosphate + H(+). Part of the ABC transporter complex XacGHIJK involved in the uptake of xylose and arabinose. Responsible for energy coupling to the transport system. This chain is Xylose/arabinose import ATP-binding protein XacK, found in Haloferax volcanii (strain ATCC 29605 / DSM 3757 / JCM 8879 / NBRC 14742 / NCIMB 2012 / VKM B-1768 / DS2) (Halobacterium volcanii).